The following is a 100-amino-acid chain: MSVDTATVAKIASLARIKVSEAELGAMVPELNGILAWVEQLGEVDVTGIEPMTAVIPNKQRLRDDVVNADPLTGGDMRDAVLANAPAPEHGFFGVPKVIE.

This sequence belongs to the GatC family. Heterotrimer of A, B and C subunits.

The catalysed reaction is L-glutamyl-tRNA(Gln) + L-glutamine + ATP + H2O = L-glutaminyl-tRNA(Gln) + L-glutamate + ADP + phosphate + H(+). It carries out the reaction L-aspartyl-tRNA(Asn) + L-glutamine + ATP + H2O = L-asparaginyl-tRNA(Asn) + L-glutamate + ADP + phosphate + 2 H(+). Allows the formation of correctly charged Asn-tRNA(Asn) or Gln-tRNA(Gln) through the transamidation of misacylated Asp-tRNA(Asn) or Glu-tRNA(Gln) in organisms which lack either or both of asparaginyl-tRNA or glutaminyl-tRNA synthetases. The reaction takes place in the presence of glutamine and ATP through an activated phospho-Asp-tRNA(Asn) or phospho-Glu-tRNA(Gln). This chain is Aspartyl/glutamyl-tRNA(Asn/Gln) amidotransferase subunit C, found in Novosphingobium aromaticivorans (strain ATCC 700278 / DSM 12444 / CCUG 56034 / CIP 105152 / NBRC 16084 / F199).